Reading from the N-terminus, the 251-residue chain is DNA repair protein RecO (251 aa).

Belongs to the RecO family.

Its function is as follows. Involved in DNA repair and RecF pathway recombination. The polypeptide is DNA repair protein RecO (Acetivibrio thermocellus (strain ATCC 27405 / DSM 1237 / JCM 9322 / NBRC 103400 / NCIMB 10682 / NRRL B-4536 / VPI 7372) (Clostridium thermocellum)).